A 554-amino-acid polypeptide reads, in one-letter code: Glutamine--tRNA ligase (554 aa).

A 'HIGH' region motif is present at residues 34-44 (PEPNGYLHIGH). ATP contacts are provided by residues 35 to 37 (EPN) and 41 to 47 (HIGHAKS). L-glutamine-binding residues include D67 and Y212. ATP contacts are provided by residues T231, 261 to 262 (RL), and 269 to 271 (MSK). Residues 268–272 (VMSKR) carry the 'KMSKS' region motif. The tract at residues 317 to 324 (TKQDNTIE) is interaction with tRNA.

This sequence belongs to the class-I aminoacyl-tRNA synthetase family. In terms of assembly, monomer.

It localises to the cytoplasm. It carries out the reaction tRNA(Gln) + L-glutamine + ATP = L-glutaminyl-tRNA(Gln) + AMP + diphosphate. The chain is Glutamine--tRNA ligase from Escherichia coli O127:H6 (strain E2348/69 / EPEC).